The chain runs to 98 residues: Defensin-A1 (98 aa).

An N-terminal signal peptide occupies residues 1-19 (MQTLSFLLALLFLVAQTPA). Residues 20–62 (QPTGEGEKGGTIQEPEATEAQDTAAVLMAAGAADGDDSDTKQL) constitute a propeptide that is removed on maturation. Intrachain disulfides connect C67/C94, C69/C83, and C73/C93. Residues 97–98 (IK) constitute a propeptide that is removed on maturation.

This sequence belongs to the alpha-defensin family. In terms of tissue distribution, highly expressed in intestine, and expressed at lower levels in lung and spleen.

It is found in the secreted. Has antimicrobial activity. This Ornithorhynchus anatinus (Duckbill platypus) protein is Defensin-A1.